Here is a 382-residue protein sequence, read N- to C-terminus: MSQTFLAFSRPSIGDEEIAAVTRVLRSGWITTGPECQKLEEEFAARVGARHAVALSSATGAMHVALLALGVGPGDEVITPSQTWVSTANMICLLGATPVFVDVDRDTLMTSAALIEHAITPRTKAIVPVHYAGAAFDLDPLYALADRHGITVIEDAAHAAGTAYQGRPVGQQGTAIFSFHAIKNMTCAEGAMLVTDNARLADRVRQLKFHGLGVDAYDRLTLGRKPQAEVMEPGFKYNLADINASIARVQLQRLDAINAQRQALASHYLERLANSPVLPLALPRYAQQHAWHLFILRIDPERCGLDRDAFMKALQARNIGTGIHFIATHLHSYYRKRFPDVRLPDTEWNSSRLCSIPLFPDMSLDDVERVVGAIESTLESSH.

K183 is modified (N6-(pyridoxal phosphate)lysine).

The protein belongs to the DegT/DnrJ/EryC1 family. ArnB subfamily. In terms of assembly, homodimer. The cofactor is pyridoxal 5'-phosphate.

The catalysed reaction is UDP-4-amino-4-deoxy-beta-L-arabinose + 2-oxoglutarate = UDP-beta-L-threo-pentopyranos-4-ulose + L-glutamate. It participates in nucleotide-sugar biosynthesis; UDP-4-deoxy-4-formamido-beta-L-arabinose biosynthesis; UDP-4-deoxy-4-formamido-beta-L-arabinose from UDP-alpha-D-glucuronate: step 2/3. Its pathway is bacterial outer membrane biogenesis; lipopolysaccharide biosynthesis. In terms of biological role, catalyzes the conversion of UDP-4-keto-arabinose (UDP-Ara4O) to UDP-4-amino-4-deoxy-L-arabinose (UDP-L-Ara4N). The modified arabinose is attached to lipid A and is required for resistance to polymyxin and cationic antimicrobial peptides. The sequence is that of UDP-4-amino-4-deoxy-L-arabinose--oxoglutarate aminotransferase from Pseudomonas syringae pv. syringae (strain B728a).